The sequence spans 397 residues: ATP-dependent RNA helicase eIF4A (397 aa).

A Q motif motif is present at residues 23–51; that stretch reads YKFDDLNLKPNIVRGIFGYGYETPSAIQQ. The Helicase ATP-binding domain occupies 54–224; the sequence is ILPITEGRDV…TKFMNNPVRI (171 aa). 67 to 74 contributes to the ATP binding site; sequence AQSGTGKT. Residues 172–175 carry the DEAD box motif; that stretch reads DEAD. The region spanning 255 to 396 is the Helicase C-terminal domain; that stretch reads DLYDSISVTQ…EMPADIGSLF (142 aa).

It belongs to the DEAD box helicase family. eIF4A subfamily. As to quaternary structure, component of the eIF4F complex, which composition varies with external and internal environmental conditions. It is composed of at least eIF4A, eIF4E and eIF4G.

The protein localises to the cytoplasm. It carries out the reaction ATP + H2O = ADP + phosphate + H(+). Functionally, ATP-dependent RNA helicase which is a subunit of the eIF4F complex involved in cap recognition and is required for mRNA binding to ribosome. In the current model of translation initiation, eIF4A unwinds RNA secondary structures in the 5'-UTR of mRNAs which is necessary to allow efficient binding of the small ribosomal subunit, and subsequent scanning for the initiator codon. This chain is ATP-dependent RNA helicase eIF4A (TIF1), found in Lodderomyces elongisporus (strain ATCC 11503 / CBS 2605 / JCM 1781 / NBRC 1676 / NRRL YB-4239) (Yeast).